Here is a 484-residue protein sequence, read N- to C-terminus: UDP-N-acetylmuramoyl-L-alanyl-D-glutamate--L-lysine ligase (484 aa).

Serine 43 contacts UDP-N-acetyl-alpha-D-muramoyl-L-alanyl-D-glutamate. 119-125 provides a ligand contact to ATP; it reads GTKGKTT. Residues 161–162, serine 188, and arginine 196 contribute to the UDP-N-acetyl-alpha-D-muramoyl-L-alanyl-D-glutamate site; that span reads TT. Lysine 230 carries the post-translational modification N6-carboxylysine. An L-lysine recognition motif motif is present at residues 405 to 408; it reads DDPN.

This sequence belongs to the MurCDEF family. MurE subfamily. Post-translationally, carboxylation is probably crucial for Mg(2+) binding and, consequently, for the gamma-phosphate positioning of ATP.

The protein resides in the cytoplasm. The catalysed reaction is UDP-N-acetyl-alpha-D-muramoyl-L-alanyl-D-glutamate + L-lysine + ATP = UDP-N-acetyl-alpha-D-muramoyl-L-alanyl-gamma-D-glutamyl-L-lysine + ADP + phosphate + H(+). Its pathway is cell wall biogenesis; peptidoglycan biosynthesis. In terms of biological role, catalyzes the addition of L-lysine to the nucleotide precursor UDP-N-acetylmuramoyl-L-alanyl-D-glutamate (UMAG) in the biosynthesis of bacterial cell-wall peptidoglycan. The chain is UDP-N-acetylmuramoyl-L-alanyl-D-glutamate--L-lysine ligase from Streptococcus agalactiae serotype Ia (strain ATCC 27591 / A909 / CDC SS700).